The sequence spans 400 residues: Nicotinate phosphoribosyltransferase (400 aa).

Histidine 220 bears the Phosphohistidine; by autocatalysis mark.

The protein belongs to the NAPRTase family. Post-translationally, transiently phosphorylated on a His residue during the reaction cycle. Phosphorylation strongly increases the affinity for substrates and increases the rate of nicotinate D-ribonucleotide production. Dephosphorylation regenerates the low-affinity form of the enzyme, leading to product release.

It carries out the reaction nicotinate + 5-phospho-alpha-D-ribose 1-diphosphate + ATP + H2O = nicotinate beta-D-ribonucleotide + ADP + phosphate + diphosphate. Its pathway is cofactor biosynthesis; NAD(+) biosynthesis; nicotinate D-ribonucleotide from nicotinate: step 1/1. Functionally, catalyzes the synthesis of beta-nicotinate D-ribonucleotide from nicotinate and 5-phospho-D-ribose 1-phosphate at the expense of ATP. This Salmonella dublin (strain CT_02021853) protein is Nicotinate phosphoribosyltransferase.